We begin with the raw amino-acid sequence, 194 residues long: Mediator of RNA polymerase II transcription subunit 8 (194 aa).

It belongs to the Mediator complex subunit 8 family. Component of the Mediator complex.

It localises to the nucleus. Functionally, component of the Mediator complex, a coactivator involved in the regulated transcription of nearly all RNA polymerase II-dependent genes. Mediator functions as a bridge to convey information from gene-specific regulatory proteins to the basal RNA polymerase II transcription machinery. Mediator is recruited to promoters by direct interactions with regulatory proteins and serves as a scaffold for the assembly of a functional preinitiation complex with RNA polymerase II and the general transcription factors. This is Mediator of RNA polymerase II transcription subunit 8 (MED8) from Yarrowia lipolytica (strain CLIB 122 / E 150) (Yeast).